The following is a 42-amino-acid chain: Gastric inhibitory polypeptide (42 aa).

This sequence belongs to the glucagon family.

It is found in the secreted. In terms of biological role, potent stimulator of insulin secretion and relatively poor inhibitor of gastric acid secretion. This is Gastric inhibitory polypeptide (GIP) from Bos taurus (Bovine).